Here is a 192-residue protein sequence, read N- to C-terminus: NAD(P)H-quinone oxidoreductase subunit J, organellar chromatophore (192 aa).

Belongs to the complex I 30 kDa subunit family. In terms of assembly, NDH is composed of at least 16 different subunits, 5 of which are encoded in the nucleus.

Its subcellular location is the plastid. It is found in the organellar chromatophore thylakoid membrane. The catalysed reaction is a quinone + NADH + H(+) = a quinol + NAD(+). Functionally, NDH-1 shuttles electrons from NADH, via FMN and iron-sulfur (Fe-S) centers, to quinones in the respiratory chain. Couples the redox reaction to proton translocation (for every two electrons transferred, four hydrogen ions are translocated across the cytoplasmic membrane), and thus conserves the redox energy in a proton gradient. The protein is NAD(P)H-quinone oxidoreductase subunit J, organellar chromatophore of Paulinella chromatophora.